A 363-amino-acid polypeptide reads, in one-letter code: Mitogen-activated protein kinase 13 (363 aa).

A Protein kinase domain is found at 33–319 (IPPIEPIGRG…VDEALKQPYL (287 aa)). Residues 39-47 (IGRGAYGIV) and Lys-62 contribute to the ATP site. Asp-159 serves as the catalytic Proton acceptor. Phosphothreonine is present on Thr-191. The short motif at 191-193 (TEY) is the TXY element. Residue Tyr-193 is modified to Phosphotyrosine. Thr-196 bears the Phosphothreonine mark.

Belongs to the protein kinase superfamily. CMGC Ser/Thr protein kinase family. MAP kinase subfamily. In terms of assembly, interacts with MKK6. Post-translationally, dually phosphorylated on Thr-191 and Tyr-193, which activates the enzyme. As to expression, expressed in roots, stems and flower buds.

It carries out the reaction L-seryl-[protein] + ATP = O-phospho-L-seryl-[protein] + ADP + H(+). The catalysed reaction is L-threonyl-[protein] + ATP = O-phospho-L-threonyl-[protein] + ADP + H(+). Its activity is regulated as follows. Activated by threonine and tyrosine phosphorylation. Activated by the MAP kinase kinase MKK6 in vitro. MKK6-MPK13 module positively regulates lateral root formation. The protein is Mitogen-activated protein kinase 13 (MPK13) of Arabidopsis thaliana (Mouse-ear cress).